Here is a 264-residue protein sequence, read N- to C-terminus: Zearalenone hydrolase (264 aa).

The 181-residue stretch at 27–207 (VLVPDGLGEC…KDLEALRGKP (181 aa)) folds into the AB hydrolase-1 domain. G32, S102, and S103 together coordinate zearalenone. The active site involves S102. E126 is a catalytic residue. The zearalenone site is built by W183, Y187, S220, and H242. Residue H242 is part of the active site.

Belongs to the AB hydrolase superfamily. Hydrolase RutD family. In terms of assembly, homodimer.

The enzyme catalyses zearalenone + H2O = hydrolyzed zearalenone + H(+). In terms of biological role, lactonohydrolase that specifically hydrolyzes and deactivates the mycotoxin zearalenone (ZEN) and its zearalenol (ZOL) derivatives. ZHD101 prefers ZEN to ZOL as its substrate, but ZOL, especially the alpha-form, shows higher estrogenic toxicity than ZEN. The chain is Zearalenone hydrolase from Bionectria ochroleuca (Gliocladium roseum).